Here is a 556-residue protein sequence, read N- to C-terminus: Putative protein SPATA31F2P (556 aa).

Disordered stretches follow at residues 133–154 and 210–231; these read ALKA…SGSD and LPKT…WVSP. A compositionally biased stretch (polar residues) spans 144–154; it reads SGGQDNDSGSD.

The protein belongs to the SPATA31 family.

This is Putative protein SPATA31F2P from Homo sapiens (Human).